The following is a 193-amino-acid chain: Recombination protein RecR (193 aa).

Residues Cys-61–Cys-76 form a C4-type zinc finger. The Toprim domain occupies Ser-84–Pro-170.

This sequence belongs to the RecR family.

Functionally, may play a role in DNA repair. It seems to be involved in an RecBC-independent recombinational process of DNA repair. It may act with RecF and RecO. In Helicobacter pylori (strain P12), this protein is Recombination protein RecR.